A 1696-amino-acid chain; its full sequence is PH domain leucine-rich repeat protein phosphatase 1 (1696 aa).

Position 1 is an N-acetylmethionine (Met-1). Disordered stretches follow at residues 1-97 and 222-398; these read MEPA…GGGA and LGHG…VVGE. Residues 79–92 are compositionally biased toward low complexity; it reads VPQPAAGGAAPVTA. The segment covering 313–325 has biased composition (polar residues); it reads DTESFSLSPSAES. Ser-378 is modified (phosphoserine). Residues 499-599 form the PH domain; it reads RIQLSGMYNV…WLRQVSKVAS (101 aa). LRR repeat units lie at residues 601-622, 624-645, 655-676, 678-699, 701-722, 724-746, 836-857, 858-879, 881-902, 904-925, 926-947, 950-971, 976-996, 1000-1021, 1024-1045, 1047-1068, 1069-1090, and 1092-1113; these read RISSVDLSCCSLEHLPANLFYS, DLTHLNLKQNFLRQNPSLPAAR, KLKSLNLSNNHLGAFPSAVCSI, TLAELNVSCNALQEVPAAVGAM, NLQTFLLDGNFLQSLPAELENM, QLSYLGLSFNEFTDIPEVLEKLT, FLKALYASSNELVQLDVYPVPN, YLSYMDVSRNCLESVPEWVCES, KLEVLDIGHNQICELPARLFCN, SLRKLLAGHNRLARLPERLERT, SVEVLDVQHNQIIELPPNLLMK, SLRFLNASANKLETLPPATLSE, ILQELYLTNNSLTDKCVPLLT, RLKILHMAYNRLQSFPASKMAK, ELEEIDISGNKLKAIPTTIMNC, RMHTVIAHSNCIEVFPEVMQLP, EVKCVDLSCNELSEITLPENLP, and KLQELDLTGNPRLALDHKSLEL. The region spanning 1138–1385 is the PPM-type phosphatase domain; it reads SHGYTEASGV…DSISAVVVQL (248 aa). Residues Asp-1173, Gly-1174, Lys-1337, and Asp-1376 each coordinate Mn(2+). Disordered stretches follow at residues 1422–1473 and 1610–1696; these read RPSD…SPAY and KPGG…DTPL. Composition is skewed to low complexity over residues 1431 to 1452, 1647 to 1660, and 1670 to 1680; these read SSSSGMASEISSELSTSEMSSE, QQQQQQQQQQQQQQ, and QAQAQAQAQAQ. The PDZ-binding signature appears at 1694–1696; it reads TPL.

In terms of assembly, interacts with the nucleotide free form of K-Ras (KRAS) via its LRR repeats. Interacts with AKT2, AKT3 and PRKCB isoform beta-II. Interacts with WDR48 and USP12. The cofactor is Mn(2+). As to expression, mainly present in brain (at protein level). Isoform 2 is more abundant in adult brain neurons than isoform 1 in. Isoforms 1 and 2 are expressed in the retina but not found in rod outer segments.

The protein resides in the cytoplasm. Its subcellular location is the membrane. It localises to the cell membrane. It is found in the nucleus. The protein localises to the nucleoplasm. The protein resides in the nucleus membrane. The catalysed reaction is O-phospho-L-seryl-[protein] + H2O = L-seryl-[protein] + phosphate. The enzyme catalyses O-phospho-L-threonyl-[protein] + H2O = L-threonyl-[protein] + phosphate. With respect to regulation, insensitive to okadaic acid. Deubiquitination by WDR48-USP12 complex positively regulates PHLPP1 stability. In terms of biological role, protein phosphatase involved in regulation of Akt and PKC signaling. Mediates dephosphorylation in the C-terminal domain hydrophobic motif of members of the AGC Ser/Thr protein kinase family; specifically acts on 'Ser-473' of AKT2 and AKT3, 'Ser-660' of PRKCB and 'Ser-657' of PRKCA. Isoform 2 seems to have a major role in regulating Akt signaling in hippocampal neurons while isoform 1 may promote Akt and PKC activation and inhibit ERK signaling. Akt regulates the balance between cell survival and apoptosis through a cascade that primarily alters the function of transcription factors that regulate pro- and antiapoptotic genes. Dephosphorylation of 'Ser-473' of Akt triggers apoptosis and suppression of tumor growth. Dephosphorylation of PRKCA and PRKCB leads to their destabilization and degradation. Dephosphorylates STK4 on 'Thr-387' leading to STK4 activation and apoptosis. Dephosphorylates RPS6KB1 and is involved in regulation of cap-dependent translation. Inhibits cancer cell proliferation and may act as a tumor suppressor. Dephosphorylates RAF1 inhibiting its kinase activity. May act as a negative regulator of K-Ras signaling in membrane rafts. Involved in the hippocampus-dependent long-term memory formation. Involved in circadian control by regulating the consolidation of circadian periodicity after resetting. Involved in development and function of regulatory T-cells. This Rattus norvegicus (Rat) protein is PH domain leucine-rich repeat protein phosphatase 1 (Phlpp1).